Consider the following 422-residue polypeptide: Phospho-N-acetylmuramoyl-pentapeptide-transferase (422 aa).

The next 9 membrane-spanning stretches (helical) occupy residues 28–48, 71–91, 95–115, 136–156, 208–228, 239–259, 279–299, 313–333, and 399–419; these read LMAI…FINL, VGVP…PCLL, LHNI…TLGF, IIGQ…SPSV, AQAV…TAVS, GMAA…AYVS, LVIF…YNAF, IGGI…IPIL, and KITV…IITL.

Belongs to the glycosyltransferase 4 family. MraY subfamily. Mg(2+) serves as cofactor.

It localises to the cell inner membrane. The catalysed reaction is UDP-N-acetyl-alpha-D-muramoyl-L-alanyl-gamma-D-glutamyl-meso-2,6-diaminopimeloyl-D-alanyl-D-alanine + di-trans,octa-cis-undecaprenyl phosphate = di-trans,octa-cis-undecaprenyl diphospho-N-acetyl-alpha-D-muramoyl-L-alanyl-D-glutamyl-meso-2,6-diaminopimeloyl-D-alanyl-D-alanine + UMP. The protein operates within cell wall biogenesis; peptidoglycan biosynthesis. Its function is as follows. Catalyzes the initial step of the lipid cycle reactions in the biosynthesis of the cell wall peptidoglycan: transfers peptidoglycan precursor phospho-MurNAc-pentapeptide from UDP-MurNAc-pentapeptide onto the lipid carrier undecaprenyl phosphate, yielding undecaprenyl-pyrophosphoryl-MurNAc-pentapeptide, known as lipid I. The protein is Phospho-N-acetylmuramoyl-pentapeptide-transferase of Phocaeicola vulgatus (strain ATCC 8482 / DSM 1447 / JCM 5826 / CCUG 4940 / NBRC 14291 / NCTC 11154) (Bacteroides vulgatus).